The chain runs to 405 residues: Glucoside xylosyltransferase 1 (405 aa).

The Cytoplasmic segment spans residues 1 to 2 (MR). The helical; Signal-anchor for type II membrane protein transmembrane segment at 3 to 23 (IYLRTFGLCIVVALLSLVFLF) threads the bilayer. The Lumenal portion of the chain corresponds to 24–405 (SKHDEGSFSA…RLQRATPPGD (382 aa)). Positions 46-65 (SFNGAKAKQRPTATTSHRDV) are disordered. Asparagine 202, asparagine 243, asparagine 277, and asparagine 372 each carry an N-linked (GlcNAc...) asparagine glycan.

It belongs to the glycosyltransferase 8 family.

The protein localises to the membrane. It catalyses the reaction 3-O-(beta-D-glucosyl)-L-seryl-[EGF-like domain protein] + UDP-alpha-D-xylose = 3-O-[alpha-D-xylosyl-(1-&gt;3)-beta-D-glucosyl]-L-seryl-[EGF-like domain protein] + UDP + H(+). Glycosyltransferase which elongates the O-linked glucose attached to EGF-like repeats in the extracellular domain of Notch proteins by catalyzing the addition of xylose. This Danio rerio (Zebrafish) protein is Glucoside xylosyltransferase 1 (gxylt1).